The primary structure comprises 69 residues: uncharacterized protein (69 aa).

This is an uncharacterized protein from Bacillus subtilis (strain 168).